We begin with the raw amino-acid sequence, 918 residues long: Cell surface glycoprotein 1 (918 aa).

Positions 1 to 34 are cleaved as a signal peptide; sequence MTDTNEKIRSLFLTALMVFSVFAGTIAFSGGAAA. N-linked (GlcNAc...) asparagine glycans are attached at residues Asn37, Asn56, Asn110, Asn219, Asn250, Asn261, and Asn291. Asn306 is a glycosylation site (N-linked (GalNAc...) asparagine). 14 N-linked (GlcNAc...) asparagine glycosylation sites follow: Asn318, Asn343, Asn392, Asn434, Asn487, Asn541, Asn555, Asn572, Asn585, Asn614, Asn715, Asn776, Asn836, and Asn845. Residues 815–894 are disordered; that stretch reads HQDTNGNEAY…DESETTAAEG (80 aa). Residues 833–846 are compositionally biased toward polar residues; sequence YTQNGSAVTDSANV. A compositionally biased stretch (acidic residues) spans 849-875; that stretch reads VEEEQTEAPDTETETEAPDTETEEETD. The helical transmembrane segment at 894–914 threads the bilayer; sequence GPGFTAAIALIALVAAALLAV. The short motif at 895–897 is the PGF sorting signal element; that stretch reads PGF.

It belongs to the halobacterial S-layer protein family. In terms of processing, N-glycosylated on Asn-306; this N-linked glycan is a branched trisaccharide containing 2-amino-6-sulfo-2,6-dideoxy-glucose (sulfoquinovosamine). Cleaved by the archaeosortase ArtA at the C-terminus, with removal of a short hydrophobic segment. Post-translationally, lipidation.

The protein localises to the secreted. Its subcellular location is the cell wall. It is found in the S-layer. It localises to the cell membrane. S-layer protein. The S-layer is a paracrystalline mono-layered assembly of proteins which coat the surface of the cell. In H.hispanica, the S-layer contains two different glycoproteins, Slg1 and Slg2, which share highly similar amino acid sequences. This chain is Cell surface glycoprotein 1, found in Haloarcula hispanica (strain ATCC 33960 / DSM 4426 / JCM 8911 / NBRC 102182 / NCIMB 2187 / VKM B-1755).